The sequence spans 246 residues: Histone H1 (246 aa).

2 disordered regions span residues 1 to 51 and 105 to 246; these read MATD…PTHL and GGKL…KAKK. Low complexity predominate over residues 9–34; sequence PAPLVDAAPEAPADAPAAPAADANAA. A compositionally biased stretch (basic residues) spans 35–47; it reads KAKKATAPKKRAS. Residues 49–119 form the H15 domain; sequence THLPYAEMVS…KVKNSYKLSS (71 aa). Composition is skewed to basic residues over residues 129–189 and 198–208; these read AAPK…KAKP and PLAKKAGRAKA. A compositionally biased stretch (low complexity) spans 224 to 235; it reads KKAAPSKKAATP.

Belongs to the histone H1/H5 family.

It localises to the nucleus. It is found in the chromosome. In terms of biological role, histones H1 are necessary for the condensation of nucleosome chains into higher-order structures. This is Histone H1 from Zea mays (Maize).